The chain runs to 541 residues: Eukaryotic translation initiation factor 3 subunit E (541 aa).

The PCI domain maps to valine 252–proline 443. A disordered region spans residues alanine 466–asparagine 541. Over residues asparagine 490–asparagine 502 the composition is skewed to gly residues. Basic and acidic residues predominate over residues glutamine 506–glutamate 522. Over residues serine 523–asparagine 541 the composition is skewed to low complexity.

It belongs to the eIF-3 subunit E family. Component of the eukaryotic translation initiation factor 3 (eIF-3) complex.

The protein resides in the cytoplasm. Its function is as follows. Component of the eukaryotic translation initiation factor 3 (eIF-3) complex, which is involved in protein synthesis of a specialized repertoire of mRNAs and, together with other initiation factors, stimulates binding of mRNA and methionyl-tRNAi to the 40S ribosome. The eIF-3 complex specifically targets and initiates translation of a subset of mRNAs involved in cell proliferation. The polypeptide is Eukaryotic translation initiation factor 3 subunit E (Mycosarcoma maydis (Corn smut fungus)).